A 110-amino-acid chain; its full sequence is MKERVENLLKELKERLGIEREVKIELKRFKRKLAPVSLTKRVIYINRELIPKLSDEELGYLIAHELLHLKHGIYHISEFEKELLELSGKDLYLSLYRKTWKGYNFPILQI.

It to M.jannaschii MJ0123 and MJ1213.

This is an uncharacterized protein from Aquifex aeolicus (strain VF5).